The primary structure comprises 82 residues: YHLGGPPVTLKLPPGTPAGRTMRARGKGAVRKDGTRGDLLVTVDVAVPQHLSSEAREALEAYRKATADEDPRAELFKAAKGA.

Residues 1-33 (YHLGGPPVTLKLPPGTPAGRTMRARGKGAVRKD) form a disordered region.

The protein belongs to the DnaJ family. As to quaternary structure, homodimer. The cofactor is Zn(2+).

The protein localises to the cytoplasm. Participates actively in the response to hyperosmotic and heat shock by preventing the aggregation of stress-denatured proteins and by disaggregating proteins, also in an autonomous, DnaK-independent fashion. Unfolded proteins bind initially to DnaJ; upon interaction with the DnaJ-bound protein, DnaK hydrolyzes its bound ATP, resulting in the formation of a stable complex. GrpE releases ADP from DnaK; ATP binding to DnaK triggers the release of the substrate protein, thus completing the reaction cycle. Several rounds of ATP-dependent interactions between DnaJ, DnaK and GrpE are required for fully efficient folding. Also involved, together with DnaK and GrpE, in the DNA replication of plasmids through activation of initiation proteins. The sequence is that of Chaperone protein DnaJ 1 (dnaJ1) from Streptomyces albus G.